The following is a 302-amino-acid chain: Taste receptor type 2 member 104 (302 aa).

The Extracellular portion of the chain corresponds to 1–7; sequence MLSALES. A helical transmembrane segment spans residues 8-28; the sequence is ILLSVATSEAMLGVLGNTFIV. Over 29 to 43 the chain is Cytoplasmic; sequence LVNYTDWVRNKKLSK. The helical transmembrane segment at 44–64 threads the bilayer; that stretch reads INFILTGLAISRIFTIWIITL. Residues 65-87 lie on the Extracellular side of the membrane; sequence DAYTKVFLLTMLMPSSLHECMSY. Residues 88–108 traverse the membrane as a helical segment; it reads IWVIINHLSVWFSTSLGIFYF. The Cytoplasmic portion of the chain corresponds to 109 to 128; the sequence is LKIANFSHYIFLWMKRRADK. A helical membrane pass occupies residues 129 to 149; that stretch reads VFVFLIVFLIITWLASFPLAV. The Extracellular segment spans residues 150 to 182; the sequence is KVIKDVKIYQSNTSWLIHLEKSELLINYVFANM. N-linked (GlcNAc...) asparagine glycosylation is present at asparagine 161. A helical transmembrane segment spans residues 183-203; that stretch reads GPISLFIVAIIACFLLTISLW. At 204–229 the chain is on the cytoplasmic side; the sequence is RHSRQMQSIGSGFRDLNTEAHMKAMK. The chain crosses the membrane as a helical span at residues 230–250; sequence VLIAFIILFILYFLGILIETL. Residues 251–259 lie on the Extracellular side of the membrane; sequence CLFLTNNKL. The helical transmembrane segment at 260–280 threads the bilayer; it reads LFIFGFTLSAMYPCCHSFILI. Residues 281–302 lie on the Cytoplasmic side of the membrane; that stretch reads LTSRELKQATMRALQRLKCCET.

This sequence belongs to the G-protein coupled receptor T2R family.

Its subcellular location is the membrane. Putative taste receptor which may play a role in the perception of bitterness. The chain is Taste receptor type 2 member 104 from Mus musculus (Mouse).